Here is a 149-residue protein sequence, read N- to C-terminus: UPF0336 protein CMM_2793 (149 aa).

In terms of domain architecture, MaoC-like spans alanine 16 to glycine 117.

Belongs to the UPF0336 family.

The polypeptide is UPF0336 protein CMM_2793 (Clavibacter michiganensis subsp. michiganensis (strain NCPPB 382)).